The chain runs to 314 residues: tRNA pseudouridine synthase B (314 aa).

Residue H43 coordinates substrate. The Nucleophile role is filled by D48. Substrate-binding residues include Y76, Y179, and L200.

This sequence belongs to the pseudouridine synthase TruB family. Type 1 subfamily.

The enzyme catalyses uridine(55) in tRNA = pseudouridine(55) in tRNA. Functionally, responsible for synthesis of pseudouridine from uracil-55 in the psi GC loop of transfer RNAs. The sequence is that of tRNA pseudouridine synthase B from Citrobacter koseri (strain ATCC BAA-895 / CDC 4225-83 / SGSC4696).